We begin with the raw amino-acid sequence, 341 residues long: Putative UPF0607 protein ENSP00000381514 (341 aa).

Residues 78 to 89 (AEEPKEATEVKD) show a composition bias toward basic and acidic residues. Disordered regions lie at residues 78–131 (AEEP…NPRP) and 216–282 (GLLT…KLPC). Residues 108 to 127 (EAASTSRPLETQGNLTSSWY) show a composition bias toward polar residues. The segment covering 243 to 252 (AGHRSRKRKL) has biased composition (basic residues).

Belongs to the UPF0607 family.

The sequence is that of Putative UPF0607 protein ENSP00000381514 from Homo sapiens (Human).